The primary structure comprises 95 residues: Ascorbate-specific PTS system EIIB component (95 aa).

Positions 1 to 95 constitute a PTS EIIB type-2 domain; that stretch reads MENKNLHIIA…EIKQALSKVL (95 aa). Cysteine 12 (phosphocysteine intermediate) is an active-site residue. Phosphocysteine is present on cysteine 12.

It is found in the cytoplasm. The catalysed reaction is N(pros)-phospho-L-histidyl-[protein] + L-ascorbate(out) = L-ascorbate 6-phosphate(in) + L-histidyl-[protein]. The phosphoenolpyruvate-dependent sugar phosphotransferase system (sugar PTS), a major carbohydrate active transport system, catalyzes the phosphorylation of incoming sugar substrates concomitantly with their translocation across the cell membrane. The enzyme II UlaABC PTS system is involved in ascorbate transport. This is Ascorbate-specific PTS system EIIB component (ulaB) from Mycoplasma pneumoniae (strain ATCC 29342 / M129 / Subtype 1) (Mycoplasmoides pneumoniae).